A 1381-amino-acid polypeptide reads, in one-letter code: DNA-directed RNA polymerase subunit beta'' (1381 aa).

Residues Cys-224, Cys-295, Cys-302, and Cys-305 each coordinate Zn(2+).

This sequence belongs to the RNA polymerase beta' chain family. RpoC2 subfamily. As to quaternary structure, in plastids the minimal PEP RNA polymerase catalytic core is composed of four subunits: alpha, beta, beta', and beta''. When a (nuclear-encoded) sigma factor is associated with the core the holoenzyme is formed, which can initiate transcription. Zn(2+) serves as cofactor.

Its subcellular location is the plastid. The protein resides in the chloroplast. It catalyses the reaction RNA(n) + a ribonucleoside 5'-triphosphate = RNA(n+1) + diphosphate. Functionally, DNA-dependent RNA polymerase catalyzes the transcription of DNA into RNA using the four ribonucleoside triphosphates as substrates. The sequence is that of DNA-directed RNA polymerase subunit beta'' from Lactuca sativa (Garden lettuce).